A 422-amino-acid polypeptide reads, in one-letter code: MALRGSHRLEVIFKRCIASPVFHSHAANRRSSQLAIKGTDPSSNGNSGQDQQNGEQKAKGWRRLVRFFVPFSLGAAVSAAVIKREDFTPTIAASKMTGRRRDFNFIADVVAGCADSVVYIEIKDTRHFDYFSGQPITASNGSGFIIEQNGLILTNAHVVINKPHTMVQVRLSDGRTFPATIEDVDQTSDLATLRIQVNNLSVMRLGKSSTLRSGEWVVALGSPLALSNTVTAGVISSTQRASQELGLRNRDINYLQTDAAITFGNSGGPLVNLDGEAIGVNSMKVTAGISFAIPIDYVKVFLERAAEKRKKGSAYKTGYPVKRYMGITMLTLTPDILFELKSRSQNMPSHLTHGVLVWKVIVGSPAHSGGLQPGDIVTHINKKEIKNSSDVYDALADNSKNLDIVILRGVKQMHVTITPEDP.

Residues 1–17 constitute a mitochondrion transit peptide; the sequence is MALRGSHRLEVIFKRCI. Residues 18 to 74 constitute a propeptide that is removed on maturation; it reads ASPVFHSHAANRRSSQLAIKGTDPSSNGNSGQDQQNGEQKAKGWRRLVRFFVPFSLG. Over residues 29 to 55 the composition is skewed to polar residues; it reads RRSSQLAIKGTDPSSNGNSGQDQQNGE. Residues 29-56 are disordered; it reads RRSSQLAIKGTDPSSNGNSGQDQQNGEQ. Residues 64-82 form a helical membrane-spanning segment; that stretch reads LVRFFVPFSLGAAVSAAVI. Short sequence motifs (IAP-binding) lie at residues 75–78 and 94–97; these read AAVS and SKMT. Residues 139-302 are serine protease; it reads SNGSGFIIEQ…IPIDYVKVFL (164 aa). Active-site charge relay system residues include H157, D189, and S266. The PDZ domain maps to 325 to 410; sequence MGITMLTLTP…NLDIVILRGV (86 aa).

Belongs to the peptidase S1C family. Interacts with th/DIAP1 (via BIR 2 domain).

The protein resides in the mitochondrion intermembrane space. The protein localises to the mitochondrion membrane. It catalyses the reaction Cleavage of non-polar aliphatic amino-acids at the P1 position, with a preference for Val, Ile and Met. At the P2 and P3 positions, Arg is selected most strongly with a secondary preference for other hydrophilic residues.. Serine protease that shows proteolytic activity against a non-specific substrate beta-casein. Promotes or induces cell death either by direct binding to and inhibition of BIRC proteins (also called inhibitor of apoptosis proteins, IAPs), leading to an increase in caspase activity, or by a BIRC inhibition-independent, caspase-independent and serine protease activity-dependent mechanism. Can antagonize antiapoptotic activity of th/Diap1 by directly inducing the degradation of th/Diap1. The polypeptide is Serine protease HTRA2, mitochondrial (Drosophila yakuba (Fruit fly)).